A 474-amino-acid chain; its full sequence is Hepatocyte nuclear factor 4-alpha (474 aa).

The nuclear receptor DNA-binding region spans 57–132 (SALCAICGDR…AGMKKEAVQN (76 aa)). NR C4-type zinc fingers lie at residues 60–80 (CAIC…CDGC) and 96–120 (CRFS…LKKC). Phosphoserine is present on residues S142 and S143. Residue Y144 is modified to Phosphotyrosine. Residues 147–377 (SSLPSINALL…NLLQEMLLGG (231 aa)) enclose the NR LBD domain. At T166 the chain carries Phosphothreonine. S167 carries the post-translational modification Phosphoserine. Glycyl lysine isopeptide (Lys-Gly) (interchain with G-Cter in ubiquitin) cross-links involve residues K234 and K307. S313 carries the phosphoserine; by AMPK modification. The 9aaTAD motif lies at 368–376 (NLLQEMLLG). The interval 419–447 (EWPRPRGQAATPETPQPSPPGGSGSEPYK) is disordered. Residues T429 and T432 each carry the phosphothreonine modification. S436 carries the post-translational modification Phosphoserine. The residue at position 458 (K458) is an N6-acetyllysine.

It belongs to the nuclear hormone receptor family. NR2 subfamily. Homodimerization is required for HNF4-alpha to bind to its recognition site. Interacts with CLOCK, BMAL1, CRY1, CRY2, PER1 and PER2. Interacts with NR0B2/SHP; the resulting heterodimer is transcriptionally inactive. Interacts with DDX3X; this interaction disrupts the interaction between HNF4 and NR0B2 that forms inactive heterodimers and enhances the formation of active HNF4 homodimers. Phosphorylated on tyrosine residue(s); phosphorylation is important for its DNA-binding activity. Phosphorylation may directly or indirectly play a regulatory role in the subnuclear distribution. Phosphorylation at Ser-313 by AMPK reduces the ability to form homodimers and bind DNA. In terms of processing, acetylation at Lys-458 lowers transcriptional activation by about two-fold.

It is found in the nucleus. Functionally, transcriptional regulator which controls the expression of hepatic genes during the transition of endodermal cells to hepatic progenitor cells, facilitating the recruitment of RNA pol II to the promoters of target genes. Activates the transcription of CYP2C38. Represses the CLOCK-BMAL1 transcriptional activity and is essential for circadian rhythm maintenance and period regulation in the liver and colon cells. The protein is Hepatocyte nuclear factor 4-alpha (HNF4A) of Homo sapiens (Human).